Reading from the N-terminus, the 402-residue chain is B box and SPRY domain-containing protein (402 aa).

Residues 1-20 (MSAEGAEPGPGSGSGPGPGP) are disordered. The B box-type zinc finger occupies 17–65 (GPGPLCPEHGQALSWFCGSERRPVCAACAGLGGRCRGHRIRRAEERAEE). A B30.2/SPRY domain is found at 212–402 (PLLTQLWATA…VADQTISIVR (191 aa)).

As to quaternary structure, interacts with TRPV5 and TRPV6. Interacts with YWHAZ/14-3-3 protein zeta.

It is found in the cytoplasm. The protein localises to the membrane. Its function is as follows. May regulate epithelial calcium transport by inhibiting TRPV5 activity. The protein is B box and SPRY domain-containing protein (BSPRY) of Homo sapiens (Human).